The chain runs to 250 residues: N-acetylmuramoyl-L-alanine amidase CwlH (250 aa).

The N-terminal stretch at 1-44 (MVTIKKDFIPVSNDNRPGYAMAPAYITVHNTANTAKGADAKMHA) is a signal peptide. One can recognise an N-acetylmuramoyl-L-alanine amidase domain in the interval 45-141 (KFVKNPNTSE…KKWSGKECPR (97 aa)).

Belongs to the N-acetylmuramoyl-L-alanine amidase 2 family.

The protein localises to the secreted. The enzyme catalyses Hydrolyzes the link between N-acetylmuramoyl residues and L-amino acid residues in certain cell-wall glycopeptides.. Autolysins are involved in some important biological processes such as cell separation, cell-wall turnover, competence for genetic transformation, formation of the flagella and sporulation. Could play a role in mother cell lysis with CwlC. This chain is N-acetylmuramoyl-L-alanine amidase CwlH (cwlH), found in Bacillus subtilis (strain 168).